A 229-amino-acid polypeptide reads, in one-letter code: Putative N-acetylmannosamine-6-phosphate 2-epimerase (229 aa).

Belongs to the NanE family.

The enzyme catalyses an N-acyl-D-glucosamine 6-phosphate = an N-acyl-D-mannosamine 6-phosphate. It participates in amino-sugar metabolism; N-acetylneuraminate degradation; D-fructose 6-phosphate from N-acetylneuraminate: step 3/5. Its function is as follows. Converts N-acetylmannosamine-6-phosphate (ManNAc-6-P) to N-acetylglucosamine-6-phosphate (GlcNAc-6-P). The sequence is that of Putative N-acetylmannosamine-6-phosphate 2-epimerase from Actinobacillus pleuropneumoniae serotype 3 (strain JL03).